Here is a 186-residue protein sequence, read N- to C-terminus: MPSAHSVKLRPLEREDLRYVHQLDNNASVMRYWFEEPYEAFVELSDLYDKHIHDQSERRFVVECDGEKAGLVELVEINHVHRRAEFQIIISPEYQGKGLATRAAKLAMDYGFTVLNLYKLYLIVDKENEKAIHIYRKLGFSVEGELMHEFFINGQYRNAIRMCIFQHQYLAEHKTPGQTLLKPTAQ.

The 161-residue stretch at 7–167 (VKLRPLERED…NAIRMCIFQH (161 aa)) folds into the N-acetyltransferase domain. Spermine is bound by residues M30, E35, E43, and 51–54 (HIHD). E35 lines the Mg(2+) pocket. Residues E35 and E43 each contribute to the spermidine site. E76 lines the Mg(2+) pocket. Residue 85 to 87 (EFQ) participates in spermine binding. Residues 88–90 (III), 95–101 (QGKGLAT), and 128–137 (NEKAIHIYRK) contribute to the acetyl-CoA site. The active-site Proton donor is Y135.

It belongs to the acetyltransferase family. As to quaternary structure, homododecamer.

The protein resides in the cytoplasm. It carries out the reaction an alkane-alpha,omega-diamine + acetyl-CoA = an N-acetylalkane-alpha,omega-diamine + CoA + H(+). The catalysed reaction is spermidine + acetyl-CoA = N(1)-acetylspermidine + CoA + H(+). It catalyses the reaction spermidine + acetyl-CoA = N(8)-acetylspermidine + CoA + H(+). The enzyme catalyses spermine + acetyl-CoA = N(1)-acetylspermine + CoA + H(+). Its pathway is amine and polyamine degradation; spermidine degradation. It functions in the pathway amine and polyamine degradation; spermine degradation. Functionally, involved in the protection against polyamine toxicity by regulating their concentration. Catalyzes the transfer of an acetyl group from acetyl coenzyme A (AcCoA) to the primary amino groups of spermidine to yield N(1)- and N(8)-acetylspermidine. It can also use spermine. This chain is Spermidine N(1)-acetyltransferase (speG), found in Escherichia coli O157:H7.